A 612-amino-acid chain; its full sequence is FAD-linked oxidoreductase easE (612 aa).

In terms of domain architecture, FAD-binding PCMH-type spans 129–313; it reads HQGRIPLYSA…TRATMRVFPD (185 aa).

Belongs to the oxygen-dependent FAD-linked oxidoreductase family. The cofactor is FAD.

It functions in the pathway alkaloid biosynthesis; ergot alkaloid biosynthesis. FAD-linked oxidoreductase; part of the gene cluster that mediates the biosynthesis of fungal ergot alkaloid. DmaW catalyzes the first step of ergot alkaloid biosynthesis by condensing dimethylallyl diphosphate (DMAP) and tryptophan to form 4-dimethylallyl-L-tryptophan. The second step is catalyzed by the methyltransferase easF that methylates 4-dimethylallyl-L-tryptophan in the presence of S-adenosyl-L-methionine, resulting in the formation of 4-dimethylallyl-L-abrine. The catalase easC and the FAD-dependent oxidoreductase easE then transform 4-dimethylallyl-L-abrine to chanoclavine-I which is further oxidized by easD in the presence of NAD(+), resulting in the formation of chanoclavine-I aldehyde. Chanoclavine-I aldehyde is the precursor of ergoamides and ergopeptines in Clavicipitaceae, and clavine-type alcaloids such as fumiclavine in Trichocomaceae. However, the metabolites downstream of chanoclavine-I aldehyde in Arthrodermataceae have not been identified yet. This Arthroderma otae (strain ATCC MYA-4605 / CBS 113480) (Microsporum canis) protein is FAD-linked oxidoreductase easE.